A 226-amino-acid chain; its full sequence is 7-cyano-7-deazaguanine synthase (226 aa).

7 to 17 (LSGGMDSLVTT) is an ATP binding site. 4 residues coordinate Zn(2+): Cys-187, Cys-195, Cys-198, and Cys-201.

It belongs to the QueC family. Zn(2+) serves as cofactor.

The enzyme catalyses 7-carboxy-7-deazaguanine + NH4(+) + ATP = 7-cyano-7-deazaguanine + ADP + phosphate + H2O + H(+). The protein operates within purine metabolism; 7-cyano-7-deazaguanine biosynthesis. In terms of biological role, catalyzes the ATP-dependent conversion of 7-carboxy-7-deazaguanine (CDG) to 7-cyano-7-deazaguanine (preQ(0)). The protein is 7-cyano-7-deazaguanine synthase of Chloroherpeton thalassium (strain ATCC 35110 / GB-78).